A 317-amino-acid chain; its full sequence is Curved DNA-binding protein (317 aa).

Residues Asp-5–Arg-69 enclose the J domain.

It is found in the cytoplasm. The protein resides in the nucleoid. Its function is as follows. DNA-binding protein that preferentially recognizes a curved DNA sequence. It is probably a functional analog of DnaJ; displays overlapping activities with DnaJ, but functions under different conditions, probably acting as a molecular chaperone in an adaptive response to environmental stresses other than heat shock. Lacks autonomous chaperone activity; binds native substrates and targets them for recognition by DnaK. Its activity is inhibited by the binding of CbpM. This is Curved DNA-binding protein from Pseudomonas putida (strain W619).